A 177-amino-acid chain; its full sequence is dCTP deaminase, dUMP-forming (177 aa).

Residues 95 to 100 (RSSLGR), D112, 120 to 122 (TLE), Q141, Y155, and Q162 each bind dCTP. The Proton donor/acceptor role is filled by E122.

It belongs to the dCTP deaminase family. As to quaternary structure, homotrimer.

The enzyme catalyses dCTP + 2 H2O = dUMP + NH4(+) + diphosphate. It functions in the pathway pyrimidine metabolism; dUMP biosynthesis; dUMP from dCTP: step 1/1. In terms of biological role, bifunctional enzyme that catalyzes both the deamination of dCTP to dUTP and the hydrolysis of dUTP to dUMP without releasing the toxic dUTP intermediate. In Hydrogenobaculum sp. (strain Y04AAS1), this protein is dCTP deaminase, dUMP-forming.